Reading from the N-terminus, the 85-residue chain is U4-theraphotoxin-Hhn1a (85 aa).

Residues 1 to 22 (MKVTLIVILTCAAVLVLHTTAA) form the signal peptide. Residues 23–48 (EELEAESQLMEVGMPDTELAAVDEER) constitute a propeptide that is removed on maturation. 3 disulfides stabilise this stretch: C52–C66, C56–C77, and C71–C82.

It belongs to the neurotoxin 12 (Hwtx-2) family. 02 (Hwtx-2) subfamily. Monomer. In terms of tissue distribution, expressed by the venom gland.

Its subcellular location is the secreted. Functionally, neurotoxin active on both insects and mammals. This is U4-theraphotoxin-Hhn1a from Cyriopagopus hainanus (Chinese bird spider).